A 460-amino-acid chain; its full sequence is Trigger factor (460 aa).

Residues 166–245 (DDFLTIDITA…VKAVKERELP (80 aa)) form the PPIase FKBP-type domain. The segment at 434-460 (AAEEAAAGEANEEADVVASDDPAAVKF) is disordered. Low complexity predominate over residues 449-460 (VVASDDPAAVKF).

Belongs to the FKBP-type PPIase family. Tig subfamily.

The protein localises to the cytoplasm. The catalysed reaction is [protein]-peptidylproline (omega=180) = [protein]-peptidylproline (omega=0). Its function is as follows. Involved in protein export. Acts as a chaperone by maintaining the newly synthesized protein in an open conformation. Functions as a peptidyl-prolyl cis-trans isomerase. The sequence is that of Trigger factor from Paenarthrobacter aurescens (strain TC1).